The following is a 418-amino-acid chain: Tyrosine--tRNA ligase (418 aa).

Tyrosine 34 contributes to the L-tyrosine binding site. The short motif at proline 39 to histidine 48 is the 'HIGH' region element. L-tyrosine contacts are provided by tyrosine 169 and glutamine 173. Residues lysine 229–serine 233 carry the 'KMSKS' region motif. Lysine 232 contributes to the ATP binding site. In terms of domain architecture, S4 RNA-binding spans asparagine 352–tyrosine 418.

Belongs to the class-I aminoacyl-tRNA synthetase family. TyrS type 1 subfamily. As to quaternary structure, homodimer.

It localises to the cytoplasm. The catalysed reaction is tRNA(Tyr) + L-tyrosine + ATP = L-tyrosyl-tRNA(Tyr) + AMP + diphosphate + H(+). Catalyzes the attachment of tyrosine to tRNA(Tyr) in a two-step reaction: tyrosine is first activated by ATP to form Tyr-AMP and then transferred to the acceptor end of tRNA(Tyr). The polypeptide is Tyrosine--tRNA ligase (Streptococcus pneumoniae (strain CGSP14)).